The chain runs to 174 residues: Small ribosomal subunit protein uS7c (174 aa).

This sequence belongs to the universal ribosomal protein uS7 family. Part of the 30S ribosomal subunit.

Its subcellular location is the plastid. It localises to the chloroplast. One of the primary rRNA binding proteins, it binds directly to 16S rRNA where it nucleates assembly of the head domain of the 30S subunit. The protein is Small ribosomal subunit protein uS7c (rps7) of Stigeoclonium helveticum (Green alga).